A 360-amino-acid chain; its full sequence is NAD(P)H-quinone oxidoreductase subunit 1, chloroplastic (360 aa).

The next 9 membrane-spanning stretches (helical) occupy residues 27–47 (IWIFVPIFSLVLGIITGVLVI), 98–118 (FSIGPSIAVISILLSYSVIPF), 129–149 (IGIFLWIAISSIAPIGLLMSG), 165–185 (AAQSISYEIPLTLCVLSISLL), 203–223 (FWGWNLWRQPIGFIIFLISSL), 248–268 (YSGIKFGLFYVASYLNLLISS), 269–289 (LFVTVLYLGGWNISIPYISIL), 297–317 (IFGTTIGIFITLAKTYLFLFI), and 340–360 (FLLPISLGNLLLTTSFQLFSL).

This sequence belongs to the complex I subunit 1 family. In terms of assembly, NDH is composed of at least 16 different subunits, 5 of which are encoded in the nucleus.

The protein localises to the plastid. Its subcellular location is the chloroplast thylakoid membrane. It carries out the reaction a plastoquinone + NADH + (n+1) H(+)(in) = a plastoquinol + NAD(+) + n H(+)(out). The catalysed reaction is a plastoquinone + NADPH + (n+1) H(+)(in) = a plastoquinol + NADP(+) + n H(+)(out). Its function is as follows. NDH shuttles electrons from NAD(P)H:plastoquinone, via FMN and iron-sulfur (Fe-S) centers, to quinones in the photosynthetic chain and possibly in a chloroplast respiratory chain. The immediate electron acceptor for the enzyme in this species is believed to be plastoquinone. Couples the redox reaction to proton translocation, and thus conserves the redox energy in a proton gradient. The sequence is that of NAD(P)H-quinone oxidoreductase subunit 1, chloroplastic from Lepidium virginicum (Virginia pepperweed).